Consider the following 165-residue polypeptide: Sec-independent protein translocase protein TatB (165 aa).

Residues 1–21 form a helical membrane-spanning segment; sequence MFDVSFTELIVIGVVALIVLG. The segment covering 67–84 has biased composition (polar residues); it reads DSTAQDVNQSLRSATDSL. Residues 67-165 are disordered; it reads DSTAQDVNQS…PKSPSTGNAT (99 aa). Residues 127-159 show a composition bias toward low complexity; the sequence is KLPGTPATLPATAAAEPTPAAPAASQAEAPKSP.

This sequence belongs to the TatB family. In terms of assembly, the Tat system comprises two distinct complexes: a TatABC complex, containing multiple copies of TatA, TatB and TatC subunits, and a separate TatA complex, containing only TatA subunits. Substrates initially bind to the TatABC complex, which probably triggers association of the separate TatA complex to form the active translocon.

It is found in the cell inner membrane. Part of the twin-arginine translocation (Tat) system that transports large folded proteins containing a characteristic twin-arginine motif in their signal peptide across membranes. Together with TatC, TatB is part of a receptor directly interacting with Tat signal peptides. TatB may form an oligomeric binding site that transiently accommodates folded Tat precursor proteins before their translocation. In Bordetella avium (strain 197N), this protein is Sec-independent protein translocase protein TatB.